The sequence spans 271 residues: 3-methyl-2-oxobutanoate hydroxymethyltransferase (271 aa).

The Mg(2+) site is built by D53 and D92. Residues 53–54 (DS), D92, and K120 contribute to the 3-methyl-2-oxobutanoate site. E122 is a Mg(2+) binding site. E189 acts as the Proton acceptor in catalysis.

The protein belongs to the PanB family. Homodecamer; pentamer of dimers. Mg(2+) is required as a cofactor.

It is found in the cytoplasm. The enzyme catalyses 3-methyl-2-oxobutanoate + (6R)-5,10-methylene-5,6,7,8-tetrahydrofolate + H2O = 2-dehydropantoate + (6S)-5,6,7,8-tetrahydrofolate. Its pathway is cofactor biosynthesis; (R)-pantothenate biosynthesis; (R)-pantoate from 3-methyl-2-oxobutanoate: step 1/2. Catalyzes the reversible reaction in which hydroxymethyl group from 5,10-methylenetetrahydrofolate is transferred onto alpha-ketoisovalerate to form ketopantoate. The protein is 3-methyl-2-oxobutanoate hydroxymethyltransferase of Paraburkholderia xenovorans (strain LB400).